The sequence spans 431 residues: CCA tRNA nucleotidyltransferase 1, mitochondrial (431 aa).

A mitochondrion-targeting transit peptide spans M1–T31. 2 residues coordinate ATP: G61 and R64. 2 residues coordinate CTP: G61 and R64. Mg(2+) contacts are provided by D74 and D76. 5 residues coordinate ATP: R148, D191, R194, R197, and R200. Residues R148, D191, R194, R197, and R200 each coordinate CTP.

This sequence belongs to the tRNA nucleotidyltransferase/poly(A) polymerase family. As to quaternary structure, monomer, and homodimer. Mg(2+) serves as cofactor. As to expression, expressed ubiquitously during early embryogenesis.

Its subcellular location is the mitochondrion. It is found in the cytoplasm. It localises to the nucleus. It catalyses the reaction a tRNA precursor + 2 CTP + ATP = a tRNA with a 3' CCA end + 3 diphosphate. The enzyme catalyses a tRNA with a 3' CCA end + 2 CTP + ATP = a tRNA with a 3' CCACCA end + 3 diphosphate. Its function is as follows. Nucleotidyltransferase that catalyzes the addition and repair of the essential 3'-terminal CCA sequence in tRNAs, which is necessary for the attachment of amino acids to the 3' terminus of tRNA molecules, using CTP and ATP as substrates. tRNA 3'-terminal CCA addition is required both for tRNA processing and repair. Promotes tRNA repair and recycling downstream of the ribosome-associated quality control (RQC) pathway by mediating addition of the tRNA 3'-terminal CCA following cleavage by ankzf1 and repair by elac1. Also involved in tRNA surveillance by mediating tandem CCA addition to generate a CCACCA at the 3' terminus of unstable tRNAs and tRNA-like transcripts. While stable tRNAs receive only 3'-terminal CCA, unstable tRNAs beginning with GG are marked with CCACCA and rapidly degraded. The structural flexibility of RNA controls the choice between CCA versus CCACCA addition: following the first CCA addition cycle, nucleotide-binding to the active site triggers a clockwise screw motion, producing torque on the RNA. This ejects stable RNAs, whereas unstable RNAs are refolded while bound to the enzyme and subjected to a second CCA catalytic cycle. The chain is CCA tRNA nucleotidyltransferase 1, mitochondrial from Danio rerio (Zebrafish).